The primary structure comprises 143 residues: Small ribosomal subunit protein uS12 (143 aa).

Residues 1–20 (MGKCRGLRTARKLRSHRRDH) are compositionally biased toward basic residues. Positions 1-26 (MGKCRGLRTARKLRSHRRDHKWHDKQ) are disordered. Residue K37 forms a Glycyl lysine isopeptide (Lys-Gly) (interchain with G-Cter in SUMO2) linkage. K54 carries the N6-succinyllysine modification. P62 bears the 3-hydroxyproline mark. N6-acetyllysine is present on K135.

Belongs to the universal ribosomal protein uS12 family. As to quaternary structure, component of the 40S small ribosomal subunit. Part of the small subunit (SSU) processome, composed of more than 70 proteins and the RNA chaperone small nucleolar RNA (snoRNA) U3. (Microbial infection) Interacts with the African swine fever virus (ASFV) ubiquitin-conjugating enzyme UBCv1; this interaction probably plays a role in the viral regulation of host protein synthesis. In terms of processing, hydroxylation at Pro-62 affects translation termination efficiency.

The protein resides in the cytoplasm. It localises to the cytosol. The protein localises to the rough endoplasmic reticulum. It is found in the nucleus. Its subcellular location is the nucleolus. Component of the ribosome, a large ribonucleoprotein complex responsible for the synthesis of proteins in the cell. The small ribosomal subunit (SSU) binds messenger RNAs (mRNAs) and translates the encoded message by selecting cognate aminoacyl-transfer RNA (tRNA) molecules. The large subunit (LSU) contains the ribosomal catalytic site termed the peptidyl transferase center (PTC), which catalyzes the formation of peptide bonds, thereby polymerizing the amino acids delivered by tRNAs into a polypeptide chain. The nascent polypeptides leave the ribosome through a tunnel in the LSU and interact with protein factors that function in enzymatic processing, targeting, and the membrane insertion of nascent chains at the exit of the ribosomal tunnel. Plays an important role in translational accuracy. Part of the small subunit (SSU) processome, first precursor of the small eukaryotic ribosomal subunit. During the assembly of the SSU processome in the nucleolus, many ribosome biogenesis factors, an RNA chaperone and ribosomal proteins associate with the nascent pre-rRNA and work in concert to generate RNA folding, modifications, rearrangements and cleavage as well as targeted degradation of pre-ribosomal RNA by the RNA exosome. In Sus scrofa (Pig), this protein is Small ribosomal subunit protein uS12 (RPS23).